The sequence spans 239 residues: 7-cyano-7-deazaguanine synthase (239 aa).

13 to 23 contacts ATP; the sequence is FSGGQDSTTCL. Positions 192, 201, 204, and 207 each coordinate Zn(2+).

The protein belongs to the QueC family. Zn(2+) is required as a cofactor.

It carries out the reaction 7-carboxy-7-deazaguanine + NH4(+) + ATP = 7-cyano-7-deazaguanine + ADP + phosphate + H2O + H(+). The protein operates within purine metabolism; 7-cyano-7-deazaguanine biosynthesis. Its function is as follows. Catalyzes the ATP-dependent conversion of 7-carboxy-7-deazaguanine (CDG) to 7-cyano-7-deazaguanine (preQ(0)). In Shewanella sp. (strain MR-4), this protein is 7-cyano-7-deazaguanine synthase.